The sequence spans 501 residues: L-arabinose isomerase (501 aa).

Mn(2+) contacts are provided by glutamate 307, glutamate 334, histidine 351, and histidine 450.

This sequence belongs to the arabinose isomerase family. Mn(2+) serves as cofactor.

It catalyses the reaction beta-L-arabinopyranose = L-ribulose. Its pathway is carbohydrate degradation; L-arabinose degradation via L-ribulose; D-xylulose 5-phosphate from L-arabinose (bacterial route): step 1/3. Catalyzes the conversion of L-arabinose to L-ribulose. The polypeptide is L-arabinose isomerase (Acidothermus cellulolyticus (strain ATCC 43068 / DSM 8971 / 11B)).